The chain runs to 375 residues: tRNA-specific 2-thiouridylase MnmA (375 aa).

Residues 16–23 (GMSGGVDS) and M42 contribute to the ATP site. The segment at 102 to 104 (NPD) is interaction with target base in tRNA. Residue C107 is the Nucleophile of the active site. A disulfide bond links C107 and C203. G131 provides a ligand contact to ATP. The segment at 153 to 155 (KDQ) is interaction with tRNA. The active-site Cysteine persulfide intermediate is the C203. The interaction with tRNA stretch occupies residues 315-316 (RY).

Belongs to the MnmA/TRMU family.

It is found in the cytoplasm. It catalyses the reaction S-sulfanyl-L-cysteinyl-[protein] + uridine(34) in tRNA + AH2 + ATP = 2-thiouridine(34) in tRNA + L-cysteinyl-[protein] + A + AMP + diphosphate + H(+). Functionally, catalyzes the 2-thiolation of uridine at the wobble position (U34) of tRNA, leading to the formation of s(2)U34. The sequence is that of tRNA-specific 2-thiouridylase MnmA from Pseudomonas aeruginosa (strain LESB58).